Here is a 122-residue protein sequence, read N- to C-terminus: Large ribosomal subunit protein uL14 (122 aa).

It belongs to the universal ribosomal protein uL14 family. In terms of assembly, part of the 50S ribosomal subunit. Forms a cluster with proteins L3 and L19. In the 70S ribosome, L14 and L19 interact and together make contacts with the 16S rRNA in bridges B5 and B8.

In terms of biological role, binds to 23S rRNA. Forms part of two intersubunit bridges in the 70S ribosome. This chain is Large ribosomal subunit protein uL14, found in Streptococcus gordonii (strain Challis / ATCC 35105 / BCRC 15272 / CH1 / DL1 / V288).